A 123-amino-acid chain; its full sequence is UPF0426 protein At1g28150, chloroplastic (123 aa).

Residues 1 to 26 (MGFVLICTCPPSSGVVVSQLHHHQFS) constitute a chloroplast transit peptide. The interval 97–123 (SGITEEEVDADGVVSNDEDSPQQIEIE) is disordered. Residues 100–123 (TEEEVDADGVVSNDEDSPQQIEIE) are compositionally biased toward acidic residues.

The protein belongs to the UPF0426 family.

The protein resides in the plastid. The protein localises to the chloroplast. It is found in the plastoglobule. In Arabidopsis thaliana (Mouse-ear cress), this protein is UPF0426 protein At1g28150, chloroplastic.